The sequence spans 414 residues: Enterobactin exporter EntS (414 aa).

Topologically, residues 1–21 are cytoplasmic; sequence MNRQSWLLNLSLLKTHPAFRA. A helical transmembrane segment spans residues 22 to 42; that stretch reads VFLARFISIVSLGLLGVAVPV. At 43–55 the chain is on the periplasmic side; the sequence is QIQMMTHSTWQVG. Residues 56 to 76 traverse the membrane as a helical segment; that stretch reads LSVTLTGGAMFIGLMVGGVLA. Residues 77–83 are Cytoplasmic-facing; that stretch reads DRYERKK. A helical membrane pass occupies residues 84–104; that stretch reads VILLARGTCGIGFIGLCVNSL. At 105–109 the chain is on the periplasmic side; it reads LPEPS. A helical membrane pass occupies residues 110-130; it reads LLAIYLLGLWDGFFASLGVTA. Residues 131–156 are Cytoplasmic-facing; sequence LLAATPALVGRENLMQAGAITMLTVR. Residues 157-177 traverse the membrane as a helical segment; that stretch reads LGSVISPMLGGILLASGGVAW. Position 178 (N178) is a topological domain, periplasmic. Residues 179-199 form a helical membrane-spanning segment; sequence YGLAAAGTFITLLPLLTLPRL. The Cytoplasmic portion of the chain corresponds to 200–218; sequence PVPPQPRENPFIALLAAFR. The chain crosses the membrane as a helical span at residues 219 to 239; the sequence is FLLASPLIGGIALLGGLVTMA. Residues 240-256 lie on the Periplasmic side of the membrane; it reads SAVRVLYPALAMSWQMS. Residues 257-277 traverse the membrane as a helical segment; the sequence is AAQIGLLYAAIPLGAAIGALT. Topologically, residues 278-287 are cytoplasmic; sequence SGQLAHSVRP. Residues 288-307 traverse the membrane as a helical segment; the sequence is GLIMLVSTVGSFLAVGLFAI. Residues 308-313 are Periplasmic-facing; it reads MPVWTA. A helical transmembrane segment spans residues 314 to 336; that stretch reads GVICLALFGWLSAISSLLQYTLL. Residues 337-356 are Cytoplasmic-facing; sequence QTQTPENMLGRMNGLWTAQN. The helical transmembrane segment at 357 to 377 threads the bilayer; that stretch reads VTGDAIGAALLGGLGAMMTPV. A topological domain (periplasmic) is located at residue A378. The chain crosses the membrane as a helical span at residues 379–399; sequence SASVSGFGLVIIGLLLLLVLG. Over 400–414 the chain is Cytoplasmic; it reads ELRRFRQTPPVSDAG.

It belongs to the major facilitator superfamily. EntS (TC 2.A.1.38) family.

It localises to the cell inner membrane. Component of an export pathway for enterobactin. In Salmonella choleraesuis (strain SC-B67), this protein is Enterobactin exporter EntS.